The primary structure comprises 286 residues: Polyamine aminopropyltransferase (286 aa).

In terms of domain architecture, PABS spans 5 to 238 (TMWHETLHDQ…GIMTFAWATD (234 aa)). Glutamine 33 contacts S-methyl-5'-thioadenosine. Residues histidine 64 and aspartate 88 each contribute to the spermidine site. S-methyl-5'-thioadenosine is bound by residues glutamate 108 and 140–141 (DG). Aspartate 158 functions as the Proton acceptor in the catalytic mechanism. Position 158–161 (158–161 (DCTD)) interacts with spermidine. An S-methyl-5'-thioadenosine-binding site is contributed by proline 165.

The protein belongs to the spermidine/spermine synthase family. In terms of assembly, homodimer or homotetramer.

The protein resides in the cytoplasm. It carries out the reaction S-adenosyl 3-(methylsulfanyl)propylamine + putrescine = S-methyl-5'-thioadenosine + spermidine + H(+). Its pathway is amine and polyamine biosynthesis; spermidine biosynthesis; spermidine from putrescine: step 1/1. In terms of biological role, catalyzes the irreversible transfer of a propylamine group from the amino donor S-adenosylmethioninamine (decarboxy-AdoMet) to putrescine (1,4-diaminobutane) to yield spermidine. This chain is Polyamine aminopropyltransferase, found in Salmonella enteritidis PT4 (strain P125109).